A 390-amino-acid chain; its full sequence is tRNA-specific 2-thiouridylase MnmA (390 aa).

ATP contacts are provided by residues 20–27 (AMSGGVDS) and Leu-46. Catalysis depends on Cys-114, which acts as the Nucleophile. A disulfide bridge connects residues Cys-114 and Cys-211. Gly-138 serves as a coordination point for ATP. The interaction with tRNA stretch occupies residues 161–163 (RDQ). Cys-211 acts as the Cysteine persulfide intermediate in catalysis.

It belongs to the MnmA/TRMU family.

Its subcellular location is the cytoplasm. It carries out the reaction S-sulfanyl-L-cysteinyl-[protein] + uridine(34) in tRNA + AH2 + ATP = 2-thiouridine(34) in tRNA + L-cysteinyl-[protein] + A + AMP + diphosphate + H(+). Its function is as follows. Catalyzes the 2-thiolation of uridine at the wobble position (U34) of tRNA, leading to the formation of s(2)U34. The polypeptide is tRNA-specific 2-thiouridylase MnmA (Azorhizobium caulinodans (strain ATCC 43989 / DSM 5975 / JCM 20966 / LMG 6465 / NBRC 14845 / NCIMB 13405 / ORS 571)).